A 397-amino-acid polypeptide reads, in one-letter code: Na(+)/H(+) antiporter NhaA 2 (397 aa).

11 consecutive transmembrane segments (helical) span residues 9–29 (LHNP…AMAV), 59–79 (LLLW…GLEL), 95–115 (ILPV…YTLI), 125–145 (GWAI…ALLG), 154–174 (LFLL…IAFF), 177–197 (SELS…LILM), 222–242 (SGVH…LKGE), 260–280 (VVGL…SLQG), 292–312 (LGIA…FVWL), 332–352 (GVAL…SLAF), and 371–391 (LGIL…LRFS).

This sequence belongs to the NhaA Na(+)/H(+) (TC 2.A.33) antiporter family.

Its subcellular location is the cell inner membrane. It carries out the reaction Na(+)(in) + 2 H(+)(out) = Na(+)(out) + 2 H(+)(in). Na(+)/H(+) antiporter that extrudes sodium in exchange for external protons. The polypeptide is Na(+)/H(+) antiporter NhaA 2 (Magnetococcus marinus (strain ATCC BAA-1437 / JCM 17883 / MC-1)).